Here is a 442-residue protein sequence, read N- to C-terminus: ATP-dependent protease ATPase subunit HslU (442 aa).

Residues isoleucine 18, 60–65 (GVGKTE), aspartate 255, glutamate 320, and arginine 392 each bind ATP.

It belongs to the ClpX chaperone family. HslU subfamily. In terms of assembly, a double ring-shaped homohexamer of HslV is capped on each side by a ring-shaped HslU homohexamer. The assembly of the HslU/HslV complex is dependent on binding of ATP.

Its subcellular location is the cytoplasm. In terms of biological role, ATPase subunit of a proteasome-like degradation complex; this subunit has chaperone activity. The binding of ATP and its subsequent hydrolysis by HslU are essential for unfolding of protein substrates subsequently hydrolyzed by HslV. HslU recognizes the N-terminal part of its protein substrates and unfolds these before they are guided to HslV for hydrolysis. The protein is ATP-dependent protease ATPase subunit HslU of Hahella chejuensis (strain KCTC 2396).